A 350-amino-acid polypeptide reads, in one-letter code: Eukaryotic translation initiation factor 3 subunit I (350 aa).

WD repeat units follow at residues 8–49, 51–89, 91–135, 149–190, 198–240, and 296–335; these read GHER…GTLE, HQGVIWSIDVDPETLLCATGGGDLAVKLWTVENGQCVYT, NSPS…ASLT, QNGS…KSLQ, EKNV…KVYK, and GHFGPLNTVAVHPDGTGYSSGGEDGFIRVHTFDKSYKDFL.

It belongs to the eIF-3 subunit I family. In terms of assembly, component of the eukaryotic translation initiation factor 3 (eIF-3) complex.

The protein localises to the cytoplasm. Functionally, component of the eukaryotic translation initiation factor 3 (eIF-3) complex, which is involved in protein synthesis of a specialized repertoire of mRNAs and, together with other initiation factors, stimulates binding of mRNA and methionyl-tRNAi to the 40S ribosome. The eIF-3 complex specifically targets and initiates translation of a subset of mRNAs involved in cell proliferation. The polypeptide is Eukaryotic translation initiation factor 3 subunit I (Lodderomyces elongisporus (strain ATCC 11503 / CBS 2605 / JCM 1781 / NBRC 1676 / NRRL YB-4239) (Yeast)).